Reading from the N-terminus, the 398-residue chain is 2-epi-5-epi-valiolone synthase (398 aa).

NAD(+) is bound by residues D62, 93–96, 126–130, 150–151, K163, K172, and 190–193; these read ETVK, GVLMD, TT, and FLAT. The active site involves K163. E205, H276, and H292 together coordinate a divalent metal cation.

The protein belongs to the sugar phosphate cyclases superfamily. EEVS family. The cofactor is NAD(+). It depends on Co(2+) as a cofactor.

It catalyses the reaction D-sedoheptulose 7-phosphate = 2-epi-5-epi-valiolone + phosphate. Its function is as follows. Catalyzes the cyclization of D-sedoheptulose 7-phosphate to 2-epi-5-epi-valiolone. Does not use ido-heptulose 7-phosphate and 3-deoxy-arabino-heptulosonate 7-phosphate. Involved in the biosynthesis of the acarviose moiety of the alpha-glucosidase inhibitor acarbose. In Actinoplanes sp. (strain ATCC 31044 / CBS 674.73 / SE50/110), this protein is 2-epi-5-epi-valiolone synthase.